Consider the following 437-residue polypeptide: Integrase (437 aa).

A Core-binding (CB) domain is found at 73–158 (WTVERWLTHW…TARTAFGEAY (86 aa)). In terms of domain architecture, Tyr recombinase spans 179–428 (EEVEPLEVED…DSVRNDVADR (250 aa)). Residues arginine 214, lysine 245, histidine 379, arginine 382, and tryptophan 405 contribute to the active site. Residue tyrosine 414 is the O-(3'-phospho-DNA)-tyrosine intermediate of the active site.

It belongs to the 'phage' integrase family.

Functionally, is a recombinase (or integrase), catalyzing the cutting and rejoining of the recombining DNA molecules. This Saccharopolyspora erythraea (Streptomyces erythraeus) protein is Integrase (int).